A 160-amino-acid polypeptide reads, in one-letter code: Ribosomal RNA large subunit methyltransferase H (160 aa).

The S-adenosyl-L-methionine site is built by Leu76 and Gly108.

Belongs to the RNA methyltransferase RlmH family. In terms of assembly, homodimer.

Its subcellular location is the cytoplasm. It carries out the reaction pseudouridine(1915) in 23S rRNA + S-adenosyl-L-methionine = N(3)-methylpseudouridine(1915) in 23S rRNA + S-adenosyl-L-homocysteine + H(+). In terms of biological role, specifically methylates the pseudouridine at position 1915 (m3Psi1915) in 23S rRNA. The protein is Ribosomal RNA large subunit methyltransferase H of Rhodopseudomonas palustris (strain ATCC BAA-98 / CGA009).